The sequence spans 262 residues: MIKWPWKTHQPQAETLAQWQDALAIPLLSPLDEREQQRLIVVAGQILQQKSIVPLQGLVLTSQMQARIALLFALPVLELGAECLDGFNEILLYPSPFVVEDEWQDDFGLVHSGPVVQSGQSWEQGPIVLNWQDVQDSFDLSGFNLVIHEAVHKLDMRNGGSATGIPPIPLRDIAAWEHDLHAAMENLQDEIDMVGEEAASMDAYAATDPAECFAVLSEYFFSAPELLANRFPVMYQHFSRFYKQDPLARLQRLQAENSAEVP.

Residues His111, His148, His152, and Glu211 each contribute to the Zn(2+) site.

This sequence belongs to the MtfA family. As to quaternary structure, interacts with Mlc. It depends on Zn(2+) as a cofactor.

The protein resides in the cytoplasm. In terms of biological role, involved in the modulation of the activity of the glucose-phosphotransferase system (glucose-PTS). Interacts with the transcriptional repressor Mlc, preventing its interaction with DNA and leading to the modulation of expression of genes regulated by Mlc, including ptsG, which encodes the PTS system glucose-specific EIICB component. Functionally, shows zinc-dependent metallopeptidase activity. The sequence is that of Mlc titration factor A from Serratia proteamaculans (strain 568).